A 239-amino-acid polypeptide reads, in one-letter code: Ribosomal RNA small subunit methyltransferase G (239 aa).

Residues glycine 80, phenylalanine 85, 103 to 105 (EAS), 131 to 132 (AE), and arginine 150 each bind S-adenosyl-L-methionine.

Belongs to the methyltransferase superfamily. RNA methyltransferase RsmG family.

The protein resides in the cytoplasm. In terms of biological role, specifically methylates the N7 position of a guanine in 16S rRNA. This chain is Ribosomal RNA small subunit methyltransferase G, found in Caldanaerobacter subterraneus subsp. tengcongensis (strain DSM 15242 / JCM 11007 / NBRC 100824 / MB4) (Thermoanaerobacter tengcongensis).